Reading from the N-terminus, the 641-residue chain is Soluble starch synthase 1, chloroplastic/amyloplastic (641 aa).

Residues 1-113 (MATAAGMGIG…DSIDKTIFVA (113 aa)) constitute a chloroplast transit peptide. A disordered region spans residues 62–96 (TFLVPTSTPPAPTQSPAPAPTPPPLPDSGVGEIEP). Positions 68–87 (STPPAPTQSPAPAPTPPPLP) are enriched in pro residues. K147 is a binding site for ADP-alpha-D-glucose.

This sequence belongs to the glycosyltransferase 1 family. Bacterial/plant glycogen synthase subfamily.

Its subcellular location is the plastid. The protein localises to the chloroplast. The protein resides in the amyloplast. The catalysed reaction is [(1-&gt;4)-alpha-D-glucosyl](n) + ADP-alpha-D-glucose = [(1-&gt;4)-alpha-D-glucosyl](n+1) + ADP + H(+). It participates in glycan biosynthesis; starch biosynthesis. This Oryza sativa subsp. indica (Rice) protein is Soluble starch synthase 1, chloroplastic/amyloplastic.